A 300-amino-acid chain; its full sequence is Ribosomal RNA small subunit methyltransferase H (300 aa).

Residues 43–45 (AGH), D60, D105, and Q112 contribute to the S-adenosyl-L-methionine site.

Belongs to the methyltransferase superfamily. RsmH family.

It localises to the cytoplasm. The catalysed reaction is cytidine(1402) in 16S rRNA + S-adenosyl-L-methionine = N(4)-methylcytidine(1402) in 16S rRNA + S-adenosyl-L-homocysteine + H(+). Functionally, specifically methylates the N4 position of cytidine in position 1402 (C1402) of 16S rRNA. The sequence is that of Ribosomal RNA small subunit methyltransferase H from Deinococcus deserti (strain DSM 17065 / CIP 109153 / LMG 22923 / VCD115).